We begin with the raw amino-acid sequence, 122 residues long: Large ribosomal subunit protein uL14 (122 aa).

Belongs to the universal ribosomal protein uL14 family. In terms of assembly, part of the 50S ribosomal subunit. Forms a cluster with proteins L3 and L19. In the 70S ribosome, L14 and L19 interact and together make contacts with the 16S rRNA in bridges B5 and B8.

Functionally, binds to 23S rRNA. Forms part of two intersubunit bridges in the 70S ribosome. The sequence is that of Large ribosomal subunit protein uL14 from Borrelia recurrentis (strain A1).